The primary structure comprises 125 residues: Holo-[acyl-carrier-protein] synthase (125 aa).

Mg(2+) contacts are provided by aspartate 8 and glutamate 57.

It belongs to the P-Pant transferase superfamily. AcpS family. Mg(2+) is required as a cofactor.

Its subcellular location is the cytoplasm. The enzyme catalyses apo-[ACP] + CoA = holo-[ACP] + adenosine 3',5'-bisphosphate + H(+). Functionally, transfers the 4'-phosphopantetheine moiety from coenzyme A to a Ser of acyl-carrier-protein. This is Holo-[acyl-carrier-protein] synthase from Dechloromonas aromatica (strain RCB).